Consider the following 703-residue polypeptide: Serotransferrin (703 aa).

Residues 1–19 form the signal peptide; the sequence is MDLSLHVALCLGMLALCLA. 2 Transferrin-like domains span residues 27-341 and 354-686; these read VRWC…ALKE and VRWC…SLNK. 2 disulfide bridges follow: C30/C65 and C40/C56. D80 and Y112 together coordinate Fe(3+). Intrachain disulfides connect C135-C218, C180-C193, and C246-C260. 4 residues coordinate hydrogencarbonate: T137, K141, A143, and G144. A Fe(3+)-binding site is contributed by Y212. Position 268 (H268) interacts with Fe(3+). Residues 341-350 are connecting region; it reads EGVKEDDLAA. 2 cysteine pairs are disulfide-bonded: C357–C389 and C367–C380. D404 and Y443 together coordinate Fe(3+). 7 cysteine pairs are disulfide-bonded: C414-C698, C432-C659, C466-C545, C490-C687, C500-C514, C511-C528, and C585-C599. The hydrogencarbonate site is built by T468, R472, A474, and G475. Y539 serves as a coordination point for Fe(3+). H607 serves as a coordination point for Fe(3+).

The protein belongs to the transferrin family. As to quaternary structure, monomer. Plasma.

It is found in the secreted. In terms of biological role, transferrins are iron binding transport proteins which can bind two Fe(3+) ions in association with the binding of an anion, usually bicarbonate. It is responsible for the transport of iron from sites of absorption and heme degradation to those of storage and utilization. Serum transferrin may also have a further role in stimulating cell proliferation. The sequence is that of Serotransferrin (tf) from Xenopus tropicalis (Western clawed frog).